Reading from the N-terminus, the 354-residue chain is Tetraacyldisaccharide 4'-kinase (354 aa).

53–60 (AWGGTGKT) is an ATP binding site.

Belongs to the LpxK family.

The enzyme catalyses a lipid A disaccharide + ATP = a lipid IVA + ADP + H(+). It functions in the pathway glycolipid biosynthesis; lipid IV(A) biosynthesis; lipid IV(A) from (3R)-3-hydroxytetradecanoyl-[acyl-carrier-protein] and UDP-N-acetyl-alpha-D-glucosamine: step 6/6. Its function is as follows. Transfers the gamma-phosphate of ATP to the 4'-position of a tetraacyldisaccharide 1-phosphate intermediate (termed DS-1-P) to form tetraacyldisaccharide 1,4'-bis-phosphate (lipid IVA). This Nitratidesulfovibrio vulgaris (strain ATCC 29579 / DSM 644 / CCUG 34227 / NCIMB 8303 / VKM B-1760 / Hildenborough) (Desulfovibrio vulgaris) protein is Tetraacyldisaccharide 4'-kinase.